The sequence spans 352 residues: Histidinol-phosphate aminotransferase (352 aa).

The residue at position 210 (K210) is an N6-(pyridoxal phosphate)lysine.

The protein belongs to the class-II pyridoxal-phosphate-dependent aminotransferase family. Histidinol-phosphate aminotransferase subfamily. As to quaternary structure, homodimer. Pyridoxal 5'-phosphate is required as a cofactor.

It carries out the reaction L-histidinol phosphate + 2-oxoglutarate = 3-(imidazol-4-yl)-2-oxopropyl phosphate + L-glutamate. It functions in the pathway amino-acid biosynthesis; L-histidine biosynthesis; L-histidine from 5-phospho-alpha-D-ribose 1-diphosphate: step 7/9. The sequence is that of Histidinol-phosphate aminotransferase from Clostridium acetobutylicum (strain ATCC 824 / DSM 792 / JCM 1419 / IAM 19013 / LMG 5710 / NBRC 13948 / NRRL B-527 / VKM B-1787 / 2291 / W).